The following is a 504-amino-acid chain: Hexose transporter 1 (504 aa).

At 1–29 (MTKSSKDICSENEGKKNGKSGFFSTSFKY) the chain is on the cytoplasmic side. The chain crosses the membrane as a helical span at residues 30–50 (VLSACIASFIFGYQVSVLNTI). Topologically, residues 51–78 (KNFIVVEFEWCKGEKDRLNCSNNTIQSS) are extracellular. Residues Cys-61 and Cys-70 are joined by a disulfide bond. The helical transmembrane segment at 79-99 (FLLASVFIGAVLGCGFSGYLV) threads the bilayer. Residues 100 to 104 (QFGRR) are Cytoplasmic-facing. A helical membrane pass occupies residues 105-125 (LSLLIIYNFFFLVSILTSITH). Topologically, residues 126 to 129 (HFHT) are extracellular. Residues 130–150 (ILFARLLSGFGIGLVTVSVPM) form a helical membrane-spanning segment. The Cytoplasmic segment spans residues 151-165 (YISEMTHKDKKGAYG). A helical membrane pass occupies residues 166–186 (VMHQLFITFGIFVAVMLGLAM). Residue Gln-169 coordinates alpha-D-glucose. Gln-169 is a binding site for beta-D-glucose. Over 187–207 (GEGPKADSTEPLTSFAKLWWR) the chain is Extracellular. A helical transmembrane segment spans residues 208–228 (LMFLFPSVISLIGILALVVFF). At 229–293 (KEETPYFLFE…SALKIPSYRY (65 aa)) the chain is on the cytoplasmic side. The chain crosses the membrane as a helical span at residues 294-314 (VIILGCLLSGLQQFTGINVLV). Alpha-D-glucose is bound by residues Gln-305, Gln-306, and Asn-311. Gln-305 contacts beta-D-glucose. Asn-311 contributes to the beta-D-glucose binding site. Topologically, residues 315-331 (SNSNELYKEFLDSHLIT) are extracellular. Residues 332–352 (ILSVVMTAVNFLMTFPAIYIV) form a helical membrane-spanning segment. Residue Asn-341 coordinates beta-D-glucose. Residues 353 to 358 (EKLGRK) lie on the Cytoplasmic side of the membrane. Residues 359–379 (TLLLWGCVGVLVAYLPTAIAN) traverse the membrane as a helical segment. Topologically, residues 380–392 (EINRNSNFVKILS) are extracellular. The helical transmembrane segment at 393-413 (IVATFVMIISFAVSYGPVLWI) threads the bilayer. Position 412 (Trp-412) interacts with alpha-D-glucose. At 414 to 429 (YLHEMFPSEIKDSAAS) the chain is on the cytoplasmic side. The chain crosses the membrane as a helical span at residues 430 to 450 (LASLVNWVCAIIVVFPSDIII). The Extracellular portion of the chain corresponds to 451 to 455 (KKSPS). The chain crosses the membrane as a helical span at residues 456–476 (ILFIVFSVMSILTFFFIFFFI). Residues 477–504 (KETKGGEIGTSPYITMEERQKHMTKSVV) lie on the Cytoplasmic side of the membrane.

It belongs to the major facilitator superfamily. Sugar transporter (TC 2.A.1.1) family. Homodimer.

The protein resides in the cell membrane. The catalysed reaction is D-glucose(out) = D-glucose(in). It catalyses the reaction D-fructose(out) = D-fructose(in). It carries out the reaction D-galactose(in) = D-galactose(out). The enzyme catalyses D-mannose(out) = D-mannose(in). The catalysed reaction is D-glucosamine(out) = D-glucosamine(in). It catalyses the reaction D-xylose(out) = D-xylose(in). Its activity is regulated as follows. Inhibited by cytochalasin B. Inhibited by compound 3361 (3-O-((undec-10-en)-1-yl)-D-glucose). Inhibited by compound HTI-1. Its function is as follows. Sodium-independent facilitative hexose transporter. Can transport D-glucose and D-fructose. Can transport D-mannose, D-galactose, D-xylose and D-glucosamine. The polypeptide is Hexose transporter 1 (Plasmodium falciparum (isolate 3D7)).